Here is a 157-residue protein sequence, read N- to C-terminus: Urease accessory protein UreE (157 aa).

It belongs to the UreE family.

The protein resides in the cytoplasm. Involved in urease metallocenter assembly. Binds nickel. Probably functions as a nickel donor during metallocenter assembly. This Paenarthrobacter aurescens (strain TC1) protein is Urease accessory protein UreE.